Reading from the N-terminus, the 272-residue chain is Undecaprenyl-diphosphatase (272 aa).

8 consecutive transmembrane segments (helical) span residues 5–25 (YSLF…FLPV), 45–65 (AKTF…VVFW), 88–108 (HLTL…GLAF), 115–135 (LFNP…LLAA), 152–171 (TYRQ…WPGF), 189–209 (YAAS…ASGL), 221–241 (GDLP…LIAI), and 251–271 (ISFV…YWVF).

This sequence belongs to the UppP family.

The protein localises to the cell inner membrane. It carries out the reaction di-trans,octa-cis-undecaprenyl diphosphate + H2O = di-trans,octa-cis-undecaprenyl phosphate + phosphate + H(+). In terms of biological role, catalyzes the dephosphorylation of undecaprenyl diphosphate (UPP). Confers resistance to bacitracin. This is Undecaprenyl-diphosphatase from Yersinia enterocolitica serotype O:8 / biotype 1B (strain NCTC 13174 / 8081).